Reading from the N-terminus, the 316-residue chain is Endochitinase 2 (316 aa).

An N-terminal signal peptide occupies residues 1–18 (EFTTLFLLFSVLLLSASA). Positions 19–60 (EQCGSQAGGALCASGLCCSKFGWCGNTNDYCGPGNCQSQCPG) constitute a Chitin-binding type-1 domain. Intrachain disulfides connect Cys-21/Cys-36, Cys-30/Cys-42, Cys-35/Cys-49, Cys-54/Cys-58, Cys-87/Cys-150, Cys-162/Cys-170, and Cys-269/Cys-301. Glu-132 (proton donor) is an active-site residue. The propeptide at 310 to 316 (GLLVDTV) is removed in mature form, vacuolar targeting.

It belongs to the glycosyl hydrolase 19 family. Chitinase class I subfamily.

The protein resides in the vacuole. The enzyme catalyses Random endo-hydrolysis of N-acetyl-beta-D-glucosaminide (1-&gt;4)-beta-linkages in chitin and chitodextrins.. Defense against chitin-containing fungal pathogens. The polypeptide is Endochitinase 2 (CHTB2) (Solanum tuberosum (Potato)).